Here is a 562-residue protein sequence, read N- to C-terminus: Cytosolic invertase 1 (562 aa).

This sequence belongs to the glycosyl hydrolase 100 family.

The protein localises to the cytoplasm. It is found in the cytosol. The catalysed reaction is Hydrolysis of terminal non-reducing beta-D-fructofuranoside residues in beta-D-fructofuranosides.. Its function is as follows. Cytosolic invertase that cleaves sucrose into glucose and fructose and is involved in the regulation of primary root elongation, lateral root formation, floral transition and pollen development. The sequence is that of Cytosolic invertase 1 from Oryza sativa subsp. japonica (Rice).